Reading from the N-terminus, the 713-residue chain is Catalase-peroxidase (713 aa).

The tryptophyl-tyrosyl-methioninium (Trp-Tyr) (with M-226) cross-link spans 77 to 200 (WHSAGTYRTT…LGATVMGLIY (124 aa)). His-78 functions as the Proton acceptor in the catalytic mechanism. Positions 200–226 (YVNPEGPDGEPDLEGSAANIRESFGRM) form a cross-link, tryptophyl-tyrosyl-methioninium (Tyr-Met) (with W-77). His-241 contacts heme b.

Belongs to the peroxidase family. Peroxidase/catalase subfamily. As to quaternary structure, homodimer or homotetramer. Requires heme b as cofactor. Formation of the three residue Trp-Tyr-Met cross-link is important for the catalase, but not the peroxidase activity of the enzyme.

It catalyses the reaction H2O2 + AH2 = A + 2 H2O. The enzyme catalyses 2 H2O2 = O2 + 2 H2O. Bifunctional enzyme with both catalase and broad-spectrum peroxidase activity. This Natronomonas pharaonis (strain ATCC 35678 / DSM 2160 / CIP 103997 / JCM 8858 / NBRC 14720 / NCIMB 2260 / Gabara) (Halobacterium pharaonis) protein is Catalase-peroxidase.